A 349-amino-acid polypeptide reads, in one-letter code: Heat-inducible transcription repressor HrcA (349 aa).

It belongs to the HrcA family.

Functionally, negative regulator of class I heat shock genes (grpE-dnaK-dnaJ and groELS operons). Prevents heat-shock induction of these operons. The chain is Heat-inducible transcription repressor HrcA from Xylella fastidiosa (strain 9a5c).